The following is a 984-amino-acid chain: Ephrin type-A receptor 3 (984 aa).

Positions 1–20 (MDCHLSILILFGCCVLSCSR) are cleaved as a signal peptide. At 21 to 541 (ELSPQPSNEV…SFSISGENSH (521 aa)) the chain is on the extracellular side. An Eph LBD domain is found at 29–207 (EVNLLDSKTI…YFKKCPFTVK (179 aa)). N-linked (GlcNAc...) asparagine glycosylation is found at N232, N337, N391, N404, and N493. 2 consecutive Fibronectin type-III domains span residues 325–435 (PPSA…TNQA) and 436–532 (APSP…SPDS). A helical transmembrane segment spans residues 542–565 (VVMIAISAAVAIIVLTVVTYVLVG). Residues 566 to 984 (RFCGYHKSKH…TQSKNGPVPV (419 aa)) are Cytoplasmic-facing. Residues Y597 and Y603 each carry the phosphotyrosine; by autocatalysis modification. One can recognise a Protein kinase domain in the interval 622 to 883 (IAIDKVVGAG…QIVSILDKLI (262 aa)). Residues 629-634 (GAGEFG), K654, and 701-707 (EYMENGS) each bind ATP. Position 702 is a phosphotyrosine; by autocatalysis (Y702). D747 serves as the catalytic Proton acceptor. 751–752 (RN) contacts ATP. At Y780 the chain carries Phosphotyrosine; by autocatalysis. The 65-residue stretch at 912–976 (ATFHTTGDWL…ISSIKALETQ (65 aa)) folds into the SAM domain. Y938 is modified (phosphotyrosine). A PDZ-binding motif is present at residues 982 to 984 (VPV).

Belongs to the protein kinase superfamily. Tyr protein kinase family. Ephrin receptor subfamily. Heterotetramer upon binding of the ligand. The heterotetramer is composed of an ephrin dimer and a receptor dimer. Oligomerization is probably required to induce biological responses. Forms a ternary EFNA5-EPHA3-ADAM10 complex mediating EFNA5 extracellular domain shedding by ADAM10 which regulates the EFNA5-EPHA3 complex internalization and function. Interacts (phosphorylated) with PTPN1; dephosphorylates EPHA3 and may regulate its trafficking and function. Interacts (phosphorylated) with CRK; mediates EFNA5-EPHA3 signaling through RHOA GTPase activation. Interacts with NCK1 (via SH2 domain); mediates EFNA5-EPHA3 signaling. In terms of processing, autophosphorylates upon activation by EFNA5. Phosphorylation on Tyr-603 mediates interaction with NCK1. Dephosphorylated by PTPN1. As to expression, most abundant in the heart, brain and lung.

The protein resides in the cell membrane. It catalyses the reaction L-tyrosyl-[protein] + ATP = O-phospho-L-tyrosyl-[protein] + ADP + H(+). Receptor tyrosine kinase which binds promiscuously membrane-bound ephrin family ligands residing on adjacent cells, leading to contact-dependent bidirectional signaling into neighboring cells. The signaling pathway downstream of the receptor is referred to as forward signaling while the signaling pathway downstream of the ephrin ligand is referred to as reverse signaling. Highly promiscuous for ephrin-A ligands it binds preferentially EFNA5. Upon activation by EFNA5 regulates cell-cell adhesion, cytoskeletal organization and cell migration. Plays a role in cardiac cells migration and differentiation and regulates the formation of the atrioventricular canal and septum during development probably through activation by EFNA1. Involved in the retinotectal mapping of neurons. May also control the segregation but not the guidance of motor and sensory axons during neuromuscular circuit development. The protein is Ephrin type-A receptor 3 (Epha3) of Rattus norvegicus (Rat).